A 430-amino-acid polypeptide reads, in one-letter code: Sorting nexin-30 (430 aa).

The span at 1 to 18 (MSNGGTPRSLPSSGQKSI) shows a compositional bias: polar residues. A disordered region spans residues 1–66 (MSNGGTPRSL…SSPASSSSLL (66 aa)). Over residues 57–66 (SSPASSSSLL) the composition is skewed to low complexity. The PX domain maps to 80–201 (RDLFVTVDDP…AFLSAKDLNK (122 aa)). The a 1,2-diacyl-sn-glycero-3-phospho-(1D-myo-inositol-3-phosphate) site is built by R123, Q125, K153, and R167. The region spanning 223-428 (KLRGRPVEFA…LQDKQDAKGE (206 aa)) is the BAR domain.

Belongs to the sorting nexin family.

The protein localises to the early endosome membrane. In terms of biological role, involved in the regulation of endocytosis and in several stages of intracellular trafficking. Together with snx4, involved in autophagosome assembly. The polypeptide is Sorting nexin-30 (snx30) (Danio rerio (Zebrafish)).